The primary structure comprises 273 residues: Esterase pigG (273 aa).

Residues Ser122, Asp215, and His243 each act as charge relay system in the active site.

It belongs to the LovG family.

It participates in secondary metabolite biosynthesis. Esterase; part of the gene cluster that mediates the biosynthesis of azaphilone pigments (MonAzPs), a complex mixture of compounds with a common azaphilone skeleton very widely used as food colorants. Within the pathway, pigG may assist the nrPKS pigA in the biosynthesis of the hexaketide precursor. The first step of the pathway is performed by the nrPKS pigA that forms the hexaketide precursor from successive condensations of five malonyl-CoA units, with a simple acetyl-CoA starter unit. The role of esterase pigG is not clear, but it may play at most a supplementary role in the formation of the benzaldehyde produced by the pigA nrPKS. This very reactive benzaldehyde is intercepted by the pigC ketoreductase that to provide the first stable enzyme-free MonAzPs intermediate, 6-(4-hydroxy-2-oxopentyl)-3-methyl-2,4-dioxocyclohexane carbaldehyde, also known as M7PKS-1. The FAD-dependent monooxygenase pigN hydroxylates M7PKS-1 at C-4, which triggers the formation of the pyran ring. PigJ, pigK and pigD are involved in the acetylation of the pyran ring. PigJ and pigK form the two subunits of a dedicated fungal FAS that produces the side chain fatty acyl moiety of MonAzPs and pigD transfers the fatty acyl chain to the C-4 alcohol. PigM and pigO are involved in the elimination of the omega-1 alcohol. PigM acts as an O-acetyltransferase that synthesizes the putative O-11 acetyl intermediate whereas pigO eliminates acetic acid to yield an intermediate with a C10(11) double bond. The dehydration of the C-11 alcohol followed by the reduction of the C6(7) double bond by the NAD(P)H-dependent oxidoreductase pigE increases the electrophilicity of the C-5 ketone of the resulting acyl benzopyran. This in turn sets up the C-5 ketone for an intramolecular Knoevenagel aldol condensation with the C-20 enol of the side chain. This condensation affords the characteristic linear tricyclic carbon skeletons of the yellow pigments that serve as the common precursors for the classical yellow pigments monascin and ankaflavin, orange pigments rubopunctatin and monascorubrin, and red pigments ribropunctamine and monascorubramine. The FAD-dependent oxidoreductase pigF is especially invoved in the biosynthesis of orange and red pigments via desaturation of C6(7). This is Esterase pigG from Monascus ruber (Mold).